Consider the following 365-residue polypeptide: Probable 7-methylxanthine methyltransferase 3 (365 aa).

Tyr18 contacts S-adenosyl-L-homocysteine. Residue Thr25 participates in theobromine binding. Positions 62, 67, 99, 100, 132, and 133 each coordinate S-adenosyl-L-homocysteine. Theobromine is bound by residues Tyr150, His153, and Trp154. Mg(2+) contacts are provided by Asn170, Phe258, and Asn259. Phe311 is a binding site for theobromine.

This sequence belongs to the methyltransferase superfamily. Type-7 methyltransferase family. It depends on Mg(2+) as a cofactor.

The catalysed reaction is 7-methylxanthine + S-adenosyl-L-methionine = theobromine + S-adenosyl-L-homocysteine + H(+). It participates in alkaloid biosynthesis. Involved in the biosynthesis of theobromine. In Theobroma cacao (Cacao), this protein is Probable 7-methylxanthine methyltransferase 3.